The primary structure comprises 212 residues: MNTNIGIIDYGMGNLHSVQQSFKRLDQSIRIVKSPNDVHECNALILPGVGSFDPAMENLRRTDLIPKIKSWVKDGKPLLGICLGLQLIFESSEEGNSEGLGLLKGKVCNLPRNTKERIPHMGWSLLKQIKECPLLDNENTSRWMYFVHSYSAIPSPEDLAATVSFGDSEVTAIVWKDSLGACQFHPEKSGKSGQRLLSSWLKWLHEKNSDLS.

The region spanning 4–210 is the Glutamine amidotransferase type-1 domain; sequence NIGIIDYGMG…LKWLHEKNSD (207 aa). Cysteine 82 (nucleophile) is an active-site residue. Active-site residues include histidine 185 and glutamate 187.

As to quaternary structure, heterodimer of HisH and HisF.

It is found in the cytoplasm. The enzyme catalyses 5-[(5-phospho-1-deoxy-D-ribulos-1-ylimino)methylamino]-1-(5-phospho-beta-D-ribosyl)imidazole-4-carboxamide + L-glutamine = D-erythro-1-(imidazol-4-yl)glycerol 3-phosphate + 5-amino-1-(5-phospho-beta-D-ribosyl)imidazole-4-carboxamide + L-glutamate + H(+). It catalyses the reaction L-glutamine + H2O = L-glutamate + NH4(+). The protein operates within amino-acid biosynthesis; L-histidine biosynthesis; L-histidine from 5-phospho-alpha-D-ribose 1-diphosphate: step 5/9. Functionally, IGPS catalyzes the conversion of PRFAR and glutamine to IGP, AICAR and glutamate. The HisH subunit catalyzes the hydrolysis of glutamine to glutamate and ammonia as part of the synthesis of IGP and AICAR. The resulting ammonia molecule is channeled to the active site of HisF. In Prochlorococcus marinus (strain MIT 9211), this protein is Imidazole glycerol phosphate synthase subunit HisH.